Reading from the N-terminus, the 88-residue chain is Protein MATERNALLY EXPRESSED GENE 1 (88 aa).

The N-terminal stretch at Met1–Gly27 is a signal peptide. A glycan (N-linked (GlcNAc...) asparagine) is linked at Asn36. 2 cysteine pairs are disulfide-bonded: Cys65/Cys87 and Cys68/Cys76.

It belongs to the MEG family. Glycosylated. Expressed exclusively in endosperm. Found in basal endosperm transfer cells.

It is found in the secreted. The protein localises to the cell wall. The protein resides in the cell membrane. Its subcellular location is the extracellular space. It localises to the extracellular matrix. In terms of biological role, regulates maternal nutrient uptake, sucrose partitioning, and seed biomass yield. Necessary and sufficient for the establishment and differentiation of the endosperm nutrient transfer cells located at the mother:seed interface. Exclusive expression of the maternal allele at the early stages of endosperm development. The maternal allele is hypomethylated. At later stages, expression becomes biallelic. Regulated by the transcription factor MRP1. This chain is Protein MATERNALLY EXPRESSED GENE 1 (MEG1), found in Zea mays (Maize).